We begin with the raw amino-acid sequence, 443 residues long: Phenylalanine--tRNA ligase alpha subunit (443 aa).

L-phenylalanine-binding positions include Thr-332, 375–377 (QVE), and Tyr-415. Glu-417 is a Mg(2+) binding site. Phe-441 is a binding site for L-phenylalanine.

Belongs to the class-II aminoacyl-tRNA synthetase family. Phe-tRNA synthetase alpha subunit type 2 subfamily. As to quaternary structure, heterotetramer; dimer of two heterodimers formed by FARSA and FARSB. Requires Mg(2+) as cofactor.

The protein localises to the cytoplasm. The enzyme catalyses tRNA(Phe) + L-phenylalanine + ATP = L-phenylalanyl-tRNA(Phe) + AMP + diphosphate + H(+). This Gallus gallus (Chicken) protein is Phenylalanine--tRNA ligase alpha subunit (FARSA).